A 205-amino-acid polypeptide reads, in one-letter code: Cell wall / vacuolar inhibitor of fructosidase 1 (205 aa).

The N-terminal stretch at 1–23 (MKMMKVMMLIVMMMMVMVMVSEG) is a signal peptide. Intrachain disulfides connect Cys-30-Cys-39 and Cys-93-Cys-134. N-linked (GlcNAc...) asparagine glycosylation is found at Asn-139 and Asn-156.

The protein belongs to the PMEI family. As to expression, mostly expressed in roots, senescent leaves and flowers (in sepals), and, to a lower extent, in stems, specifically in the vascular tissues (e.g. in the phloem).

The protein resides in the vacuole. Inhibits fructosidases from vacuoles (vacuolar invertase VI). In Arabidopsis thaliana (Mouse-ear cress), this protein is Cell wall / vacuolar inhibitor of fructosidase 1 (C/VIF1).